We begin with the raw amino-acid sequence, 275 residues long: Calcyphosin (275 aa).

Residues 59–87 (PGTTQLTQGPAGRTLGQTQASCPEPRPSM) are disordered. 4 EF-hand domains span residues 107 to 142 (SGIQ…LGLV), 143 to 178 (LDQA…PMSQ), 179 to 214 (AREA…RAHP), and 222 to 258 (TEDE…VSAS). Ca(2+) is bound by residues Asp120, Asp122, Ser124, Ser126, Glu131, Asp156, Asn158, Ser160, Thr162, Glu167, Asp192, Ser194, Asp196, and Asp203. Position 126 is a phosphoserine; by PKA (Ser126).

As to quaternary structure, monomer. Does not form oligomers in the presence of calcium.

The protein localises to the cytoplasm. Its function is as follows. Calcium-binding protein. May play a role in cellular signaling events (Potential). This is Calcyphosin from Homo sapiens (Human).